The sequence spans 363 residues: NAD(P)H-quinone oxidoreductase subunit 1, chloroplastic (363 aa).

A run of 7 helical transmembrane segments spans residues 26 to 46 (IIWILIPIFTLVLGITIGVLV), 98 to 118 (FSIGPSIAVISILLSYSVIPF), 127 to 147 (LTIGVFLWIAISSIAPIGLLM), 246 to 266 (TEYSGIKFGLFYVASYLNLLV), 268 to 288 (SLFVTVLYLGGWNLSIPYIFV), 300 to 320 (VFGPVIGIFITLAKTYLFLFI), and 336 to 356 (LLNLGWKFLLPISLGNLLLTT).

This sequence belongs to the complex I subunit 1 family. In terms of assembly, NDH is composed of at least 16 different subunits, 5 of which are encoded in the nucleus.

It is found in the plastid. It localises to the chloroplast thylakoid membrane. The enzyme catalyses a plastoquinone + NADH + (n+1) H(+)(in) = a plastoquinol + NAD(+) + n H(+)(out). It carries out the reaction a plastoquinone + NADPH + (n+1) H(+)(in) = a plastoquinol + NADP(+) + n H(+)(out). Its function is as follows. NDH shuttles electrons from NAD(P)H:plastoquinone, via FMN and iron-sulfur (Fe-S) centers, to quinones in the photosynthetic chain and possibly in a chloroplast respiratory chain. The immediate electron acceptor for the enzyme in this species is believed to be plastoquinone. Couples the redox reaction to proton translocation, and thus conserves the redox energy in a proton gradient. In Coffea arabica (Arabian coffee), this protein is NAD(P)H-quinone oxidoreductase subunit 1, chloroplastic.